The primary structure comprises 910 residues: Harmonin (910 aa).

Residues 1-86 form an N-terminal domain region; sequence MDRKVAREFR…LTPRRSRKLK (86 aa). PDZ domains follow at residues 87-171 and 211-295; these read EVRL…GLIP and KVFI…AGRE. Residues 194 to 833 form a mediates interaction with MYO7B region; sequence GVRGGLGSPG…KAWNQGGDWI (640 aa). Residue Ser-219 is modified to Phosphoserine. Coiled-coil stretches lie at residues 299–377 and 417–482; these read TDRE…WEED and TIRK…DLEE. The disordered stretch occupies residues 563–688; the sequence is VMPHPPSVNS…PPRGPGVSTI (126 aa). A compositionally biased stretch (pro residues) spans 564-582; the sequence is MPHPPSVNSPSKVPAPPVL. A compositionally biased stretch (low complexity) spans 583–596; it reads PSSGHVSSSSSPWV. Positions 599 to 611 are enriched in pro residues; the sequence is TPPPIPIPPPPSI. Residues 650-664 are compositionally biased toward polar residues; sequence NTHSGKPSSSPTTER. The 88-residue stretch at 752-839 folds into the PDZ 3 domain; that stretch reads DVRLLRIKKE…GDWIDLVVAV (88 aa). A disordered region spans residues 890–910; that stretch reads KSRERNQTDPSWRPASSAPSP. The segment covering 899-910 has biased composition (low complexity); sequence PSWRPASSAPSP.

As to quaternary structure, part of the IMAC/intermicrovillar adhesion complex/intermicrovillar tip-link complex composed of ANKS4B, MYO7B, USH1C, CDHR2 and CDHR5. Part of a complex composed of USH1C, USH1G and MYO7A. Interacts with F-actin. Interacts with USH2A. Interacts with SLC4A7. Interacts (via PDZ1 domain) with the C-terminus of USHBP1. Interacts (via N-terminus and PDZ 2 domain) with CDH23. Interacts with USH1G. Interacts with MYO7B. Interacts with CDHR2 and CDHR5; may mediate their interaction with MYO7B at the microvilli tip. Interacts (via PDZ 1 domain) with ANKS4B. Interacts (via PDZ 1 domain) with DOCK4. As to expression, detected in stereocilia of cochlear hair cells (at protein level). Isoform 1 is expressed in the eye, cochlea, vestibule, heart, kidney, small intestine and testis; it is barely visible in skeletal muscle, liver, and lung and is absent from the brain. Isoforms 2 and 3 are expressed in the cochlea and vestibule.

It is found in the cytoplasm. The protein localises to the cytosol. Its subcellular location is the cytoskeleton. The protein resides in the cell projection. It localises to the microvillus. Its function is as follows. Anchoring/scaffolding protein that is a part of the functional network formed by USH1C, USH1G, CDH23 and MYO7A that mediates mechanotransduction in cochlear hair cells. Required for normal development and maintenance of cochlear hair cell bundles. As part of the intermicrovillar adhesion complex/IMAC plays a role in brush border differentiation, controlling microvilli organization and length. Probably plays a central regulatory role in the assembly of the complex, recruiting CDHR2, CDHR5 and MYO7B to the microvilli tips. This Mus musculus (Mouse) protein is Harmonin (Ush1c).